A 56-amino-acid polypeptide reads, in one-letter code: MKWKMKKCPKDNTYTFKDICPVCGSKTMIPHPSRFSPEDKYVKYRIELKKGVKLNC.

It belongs to the NOP10 family.

Functionally, involved in ribosome biogenesis; more specifically in 18S rRNA pseudouridylation and in cleavage of pre-rRNA. This is Ribosome biogenesis protein Nop10 from Saccharolobus islandicus (strain Y.N.15.51 / Yellowstone #2) (Sulfolobus islandicus).